We begin with the raw amino-acid sequence, 344 residues long: Holliday junction branch migration complex subunit RuvB (344 aa).

The large ATPase domain (RuvB-L) stretch occupies residues 1-182 (MRIELLNTPP…FGINSRFDYY (182 aa)). ATP contacts are provided by residues Ile21, Arg22, Gly63, Lys66, Thr67, Thr68, 129-131 (EDF), Arg172, Tyr182, and Arg219. Thr67 contributes to the Mg(2+) binding site. Residues 183–253 (APELLEGIIR…IAMKTLDCLE (71 aa)) form a small ATPAse domain (RuvB-S) region. The tract at residues 256-344 (EEGLDDMDKK…ISLFDAQPTS (89 aa)) is head domain (RuvB-H). Arg311 and Arg316 together coordinate DNA.

The protein belongs to the RuvB family. As to quaternary structure, homohexamer. Forms an RuvA(8)-RuvB(12)-Holliday junction (HJ) complex. HJ DNA is sandwiched between 2 RuvA tetramers; dsDNA enters through RuvA and exits via RuvB. An RuvB hexamer assembles on each DNA strand where it exits the tetramer. Each RuvB hexamer is contacted by two RuvA subunits (via domain III) on 2 adjacent RuvB subunits; this complex drives branch migration. In the full resolvosome a probable DNA-RuvA(4)-RuvB(12)-RuvC(2) complex forms which resolves the HJ.

Its subcellular location is the cytoplasm. It catalyses the reaction ATP + H2O = ADP + phosphate + H(+). The RuvA-RuvB-RuvC complex processes Holliday junction (HJ) DNA during genetic recombination and DNA repair, while the RuvA-RuvB complex plays an important role in the rescue of blocked DNA replication forks via replication fork reversal (RFR). RuvA specifically binds to HJ cruciform DNA, conferring on it an open structure. The RuvB hexamer acts as an ATP-dependent pump, pulling dsDNA into and through the RuvAB complex. RuvB forms 2 homohexamers on either side of HJ DNA bound by 1 or 2 RuvA tetramers; 4 subunits per hexamer contact DNA at a time. Coordinated motions by a converter formed by DNA-disengaged RuvB subunits stimulates ATP hydrolysis and nucleotide exchange. Immobilization of the converter enables RuvB to convert the ATP-contained energy into a lever motion, pulling 2 nucleotides of DNA out of the RuvA tetramer per ATP hydrolyzed, thus driving DNA branch migration. The RuvB motors rotate together with the DNA substrate, which together with the progressing nucleotide cycle form the mechanistic basis for DNA recombination by continuous HJ branch migration. Branch migration allows RuvC to scan DNA until it finds its consensus sequence, where it cleaves and resolves cruciform DNA. The chain is Holliday junction branch migration complex subunit RuvB from Pelodictyon phaeoclathratiforme (strain DSM 5477 / BU-1).